The chain runs to 113 residues: Hydrogenase maturation factor HypA (113 aa).

H2 contributes to the Ni(2+) binding site. 4 residues coordinate Zn(2+): C73, C76, C89, and C92.

Belongs to the HypA/HybF family.

Involved in the maturation of [NiFe] hydrogenases. Required for nickel insertion into the metal center of the hydrogenase. This Azotobacter vinelandii protein is Hydrogenase maturation factor HypA.